A 262-amino-acid polypeptide reads, in one-letter code: 5'-nucleotidase SurE (262 aa).

The a divalent metal cation site is built by aspartate 13, aspartate 14, serine 44, and asparagine 97.

It belongs to the SurE nucleotidase family. It depends on a divalent metal cation as a cofactor.

The protein resides in the cytoplasm. It catalyses the reaction a ribonucleoside 5'-phosphate + H2O = a ribonucleoside + phosphate. Functionally, nucleotidase that shows phosphatase activity on nucleoside 5'-monophosphates. This chain is 5'-nucleotidase SurE, found in Myxococcus xanthus (strain DK1622).